A 527-amino-acid chain; its full sequence is Bifunctional purine biosynthesis protein PurH (527 aa).

Positions 1–144 constitute an MGS-like domain; it reads MNRRALISVS…KNHESVAIIV (144 aa).

This sequence belongs to the PurH family.

The catalysed reaction is (6R)-10-formyltetrahydrofolate + 5-amino-1-(5-phospho-beta-D-ribosyl)imidazole-4-carboxamide = 5-formamido-1-(5-phospho-D-ribosyl)imidazole-4-carboxamide + (6S)-5,6,7,8-tetrahydrofolate. It carries out the reaction IMP + H2O = 5-formamido-1-(5-phospho-D-ribosyl)imidazole-4-carboxamide. The protein operates within purine metabolism; IMP biosynthesis via de novo pathway; 5-formamido-1-(5-phospho-D-ribosyl)imidazole-4-carboxamide from 5-amino-1-(5-phospho-D-ribosyl)imidazole-4-carboxamide (10-formyl THF route): step 1/1. It participates in purine metabolism; IMP biosynthesis via de novo pathway; IMP from 5-formamido-1-(5-phospho-D-ribosyl)imidazole-4-carboxamide: step 1/1. The polypeptide is Bifunctional purine biosynthesis protein PurH (Heliobacterium modesticaldum (strain ATCC 51547 / Ice1)).